The following is a 731-amino-acid chain: Putative pentatricopeptide repeat-containing protein At1g17630 (731 aa).

PPR repeat units follow at residues 88–118 (SGSL…VSLV), 122–156 (DLRL…GLTG), 157–191 (DGYI…GLKE), 192–222 (NLHV…MPVR), 223–257 (NRMS…EFKP), 258–292 (DEVT…GNAV), 293–327 (SGEA…GFEE), 328–358 (YLPS…IRNK), 359–393 (GIES…NHVC), 398–432 (NVVT…KVLA), 433–467 (NSVT…SMSE), 468–498 (NILV…IRDK), 499–533 (DLIS…GFHP), 534–569 (DGIA…GLEP), and 570–600 (QQEH…MPME). The tract at residues 605–680 (VLGALLNSCR…VSGSSWIEVK (76 aa)) is type E motif. Positions 681 to 711 (KKKYKFSSGSIVQSEFETIYPVLEDLVSHML) are type E(+) motif.

Belongs to the PPR family. PCMP-E subfamily.

This Arabidopsis thaliana (Mouse-ear cress) protein is Putative pentatricopeptide repeat-containing protein At1g17630 (PCMP-E72).